Here is a 351-residue protein sequence, read N- to C-terminus: DNA polymerase IV (351 aa).

Positions 4–185 (IIHVDMDCFY…LPLGKIPGVG (182 aa)) constitute a UmuC domain. Positions 8 and 103 each coordinate Mg(2+). Glutamate 104 is a catalytic residue.

Belongs to the DNA polymerase type-Y family. Monomer. Requires Mg(2+) as cofactor.

It is found in the cytoplasm. The catalysed reaction is DNA(n) + a 2'-deoxyribonucleoside 5'-triphosphate = DNA(n+1) + diphosphate. Its function is as follows. Poorly processive, error-prone DNA polymerase involved in untargeted mutagenesis. Copies undamaged DNA at stalled replication forks, which arise in vivo from mismatched or misaligned primer ends. These misaligned primers can be extended by PolIV. Exhibits no 3'-5' exonuclease (proofreading) activity. May be involved in translesional synthesis, in conjunction with the beta clamp from PolIII. The protein is DNA polymerase IV of Citrobacter koseri (strain ATCC BAA-895 / CDC 4225-83 / SGSC4696).